The sequence spans 363 residues: GDP-fucose transporter (363 aa).

8 consecutive transmembrane segments (helical) span residues 30–47, 62–79, 126–148, 152–171, 180–202, 222–244, 251–273, and 307–326; these read VITA…LVFL, FITW…LFLS, VSFY…YLIL, TSGQ…LLGV, LSYT…AIYT, LNAL…VFYF, TFWI…TGWQ, and LLWW…YTYV. The interval 334 to 363 is disordered; that stretch reads KNSGASPASEAKSDKVKLLGRDGNAAEESV. Positions 344-353 are enriched in basic and acidic residues; the sequence is AKSDKVKLLG.

Belongs to the TPT transporter family. SLC35C subfamily.

Its subcellular location is the golgi apparatus membrane. Functionally, involved in GDP-fucose import from the cytoplasm into the Golgi lumen. In Caenorhabditis elegans, this protein is GDP-fucose transporter.